Consider the following 537-residue polypeptide: Frizzled-4 (537 aa).

The first 36 residues, 1–36 (MAWRGAGPSVPGAPGGVGLSLGLLLQLLLLLGPARG), serve as a signal peptide directing secretion. Over 37–212 (FGDEEERRCD…KCGYDAGLYS (176 aa)) the chain is Extracellular. Residues 40–161 (EEERRCDPIR…NDHNHMCMEG (122 aa)) enclose the FZ domain. 8 disulfides stabilise this stretch: cysteine 45/cysteine 106, cysteine 53/cysteine 99, cysteine 90/cysteine 128, cysteine 117/cysteine 158, cysteine 121/cysteine 145, cysteine 181/cysteine 200, cysteine 204/cysteine 282, and cysteine 302/cysteine 377. A glycan (N-linked (GlcNAc...) asparagine) is linked at asparagine 59. Residue asparagine 144 is glycosylated (N-linked (GlcNAc...) asparagine). Residues 213–243 (RSAKEFTDIWMAVWASLCFISTAFTVLTFLI) traverse the membrane as a helical segment. Residues 244-249 (DSSRFS) lie on the Cytoplasmic side of the membrane. Residues 250–275 (YPERPIIFLSMCYNIYSIAYIVRLTV) form a helical membrane-spanning segment. Residues 276–299 (GRERISCDFEEAAEPVLIQEGLKN) lie on the Extracellular side of the membrane. A helical transmembrane segment spans residues 300–333 (TGCAIIFLLMYFFGMASSIWWVILTLTWFLAAGL). Topologically, residues 334 to 336 (KWG) are cytoplasmic. A helical transmembrane segment spans residues 337-365 (HEAIEMHSSYFHIAAWAIPAVKTIVILIM). Over 366 to 383 (RLVDADELTGLCYVGNQN) the chain is Extracellular. The helical transmembrane segment at 384–418 (LDALTGFVVAPLFTYLVIGTLFIAAGLVALFKIRS) threads the bilayer. Over 419 to 431 (NLQKDGTKTDKLE) the chain is Cytoplasmic. A helical membrane pass occupies residues 432–460 (RLMVKIGVFSVLYTVPATCVIACYFYEIS). At 461–473 (NWALFRYSADDSN) the chain is on the extracellular side. The helical transmembrane segment at 474 to 495 (MAVEMLKIFMSLLVGITSGMWI) threads the bilayer. Over 496-537 (WSAKTLHTWQKCSNRLVNSGKVKREKRGNGWVKPGKGSETVV) the chain is Cytoplasmic. The short motif at 499-504 (KTLHTW) is the Lys-Thr-X-X-X-Trp motif, mediates interaction with the PDZ domain of Dvl family members element. Positions 535–537 (TVV) match the PDZ-binding motif.

This sequence belongs to the G-protein coupled receptor Fz/Smo family. Interacts with MAGI3 and NDP. Component of a complex, at least composed of TSPAN12, FZD4 and norrin (NDP). Interacts (via FZ domain) with TSKU; TSKU competes with WNT2B for binding to FZD4, inhibiting Wnt signaling and repressing peripheral eye development. Interacts with glypican GPC3. Post-translationally, ubiquitinated by ZNRF3, leading to its degradation by the proteasome. As to expression, almost ubiquitous. Largely expressed in adult heart, skeletal muscle, ovary, and fetal kidney. Moderate amounts in adult liver, kidney, pancreas, spleen, and fetal lung, and small amounts in placenta, adult lung, prostate, testis, colon, fetal brain and liver.

It localises to the cell membrane. Receptor for Wnt proteins. Most frizzled receptors are coupled to the beta-catenin (CTNNB1) canonical signaling pathway, which leads to the activation of disheveled proteins, inhibition of GSK-3 kinase, nuclear accumulation of beta-catenin (CTNNB1) and activation of Wnt target genes. Plays a critical role in retinal vascularization by acting as a receptor for Wnt proteins and norrin (NDP). In retina, it can be activated by Wnt protein-binding and also by Wnt-independent signaling via binding of norrin (NDP), promoting in both cases beta-catenin (CTNNB1) accumulation and stimulation of LEF/TCF-mediated transcriptional programs. A second signaling pathway involving PKC and calcium fluxes has been seen for some family members, but it is not yet clear if it represents a distinct pathway or if it can be integrated in the canonical pathway, as PKC seems to be required for Wnt-mediated inactivation of GSK-3 kinase. Both pathways seem to involve interactions with G-proteins. May be involved in transduction and intercellular transmission of polarity information during tissue morphogenesis and/or in differentiated tissues. The sequence is that of Frizzled-4 (FZD4) from Homo sapiens (Human).